Here is a 141-residue protein sequence, read N- to C-terminus: Nucleoside diphosphate kinase (141 aa).

6 residues coordinate ATP: Lys-9, Phe-57, Arg-85, Thr-91, Arg-102, and Asn-112. The active-site Pros-phosphohistidine intermediate is the His-115.

It belongs to the NDK family. Homotetramer. Mg(2+) is required as a cofactor.

The protein localises to the cytoplasm. It carries out the reaction a 2'-deoxyribonucleoside 5'-diphosphate + ATP = a 2'-deoxyribonucleoside 5'-triphosphate + ADP. The enzyme catalyses a ribonucleoside 5'-diphosphate + ATP = a ribonucleoside 5'-triphosphate + ADP. Its function is as follows. Major role in the synthesis of nucleoside triphosphates other than ATP. The ATP gamma phosphate is transferred to the NDP beta phosphate via a ping-pong mechanism, using a phosphorylated active-site intermediate. The chain is Nucleoside diphosphate kinase from Prosthecochloris aestuarii (strain DSM 271 / SK 413).